The chain runs to 496 residues: Glycerol kinase (496 aa).

Threonine 14 lines the ADP pocket. The ATP site is built by threonine 14 and threonine 15. Threonine 14 is a binding site for sn-glycerol 3-phosphate. The sn-glycerol 3-phosphate site is built by arginine 84, glutamate 85, tyrosine 136, and aspartate 246. 5 residues coordinate glycerol: arginine 84, glutamate 85, tyrosine 136, aspartate 246, and glutamine 247. Residues threonine 268 and glycine 313 each coordinate ADP. ATP contacts are provided by threonine 268, glycine 313, glutamine 317, and glycine 414. Residues glycine 414 and asparagine 418 each contribute to the ADP site.

This sequence belongs to the FGGY kinase family.

The enzyme catalyses glycerol + ATP = sn-glycerol 3-phosphate + ADP + H(+). Its pathway is polyol metabolism; glycerol degradation via glycerol kinase pathway; sn-glycerol 3-phosphate from glycerol: step 1/1. Inhibited by fructose 1,6-bisphosphate (FBP). Key enzyme in the regulation of glycerol uptake and metabolism. Catalyzes the phosphorylation of glycerol to yield sn-glycerol 3-phosphate. This chain is Glycerol kinase, found in Myxococcus xanthus (strain DK1622).